We begin with the raw amino-acid sequence, 179 residues long: Probable WRKY transcription factor 24 (179 aa).

The segment at residues 92 to 157 is a DNA-binding region (WRKY); sequence SDDDVLDDGY…YEGVHNHPCE (66 aa).

Belongs to the WRKY group II-c family.

It localises to the nucleus. Its function is as follows. Transcription factor. Interacts specifically with the W box (5'-(T)TGAC[CT]-3'), a frequently occurring elicitor-responsive cis-acting element. The chain is Probable WRKY transcription factor 24 (WRKY24) from Arabidopsis thaliana (Mouse-ear cress).